We begin with the raw amino-acid sequence, 34 residues long: Small, acid-soluble spore protein M (34 aa).

Residues 1-10 (MKTRPKKAGQ) show a composition bias toward basic residues. Positions 1–34 (MKTRPKKAGQQKKTESKAIDSLDKKLGGPNRPST) are disordered. Residues 12–26 (KKTESKAIDSLDKKL) are compositionally biased toward basic and acidic residues.

It localises to the spore core. This Bacillus subtilis (strain 168) protein is Small, acid-soluble spore protein M (sspM).